The sequence spans 449 residues: Glutamate--tRNA ligase 2 (449 aa).

A 'HIGH' region motif is present at residues 17-27; that stretch reads PSPTGFLHVGN. The short motif at 248 to 252 is the 'KMSKS' region element; the sequence is ALSKR. K251 lines the ATP pocket.

Belongs to the class-I aminoacyl-tRNA synthetase family. Glutamate--tRNA ligase type 1 subfamily. In terms of assembly, monomer.

The protein localises to the cytoplasm. It carries out the reaction tRNA(Glu) + L-glutamate + ATP = L-glutamyl-tRNA(Glu) + AMP + diphosphate. Functionally, catalyzes the attachment of glutamate to tRNA(Glu) in a two-step reaction: glutamate is first activated by ATP to form Glu-AMP and then transferred to the acceptor end of tRNA(Glu). The polypeptide is Glutamate--tRNA ligase 2 (Jannaschia sp. (strain CCS1)).